Here is a 425-residue protein sequence, read N- to C-terminus: Protein-glutamate methylesterase/protein-glutamine glutaminase (425 aa).

One can recognise a Response regulatory domain in the interval 22 to 140; sequence RVMVVDDSVV…EVAAADIFRH (119 aa). Asp-73 carries the 4-aspartylphosphate modification. Disordered regions lie at residues 150–174 and 203–223; these read AAKRRRPATVASPPPDHDDYGSNAS and VQREQQPRSAQAARAMSRPQP. The CheB-type methylesterase domain maps to 221-417; that stretch reads PQPTLRSFSA…PLQQIAPKLV (197 aa). Active-site residues include Ser-241, His-269, and Asp-365.

The protein belongs to the CheB family. Phosphorylated by CheA. Phosphorylation of the N-terminal regulatory domain activates the methylesterase activity.

It localises to the cytoplasm. It catalyses the reaction [protein]-L-glutamate 5-O-methyl ester + H2O = L-glutamyl-[protein] + methanol + H(+). It carries out the reaction L-glutaminyl-[protein] + H2O = L-glutamyl-[protein] + NH4(+). In terms of biological role, involved in chemotaxis. Part of a chemotaxis signal transduction system that modulates chemotaxis in response to various stimuli. Catalyzes the demethylation of specific methylglutamate residues introduced into the chemoreceptors (methyl-accepting chemotaxis proteins or MCP) by CheR. Also mediates the irreversible deamidation of specific glutamine residues to glutamic acid. This chain is Protein-glutamate methylesterase/protein-glutamine glutaminase, found in Nitrobacter winogradskyi (strain ATCC 25391 / DSM 10237 / CIP 104748 / NCIMB 11846 / Nb-255).